The sequence spans 76 residues: MRKNWTDEEIRVLQNNYEYVDTEIIANFLNRSYHSIKNKAVRLGISKNSVWTEDEDIYLEYFVYETTTILAKLPNF.

It to L.innocua lin1255, lin1742 and lin2600.

This is an uncharacterized protein from Listeria innocua serovar 6a (strain ATCC BAA-680 / CLIP 11262).